The primary structure comprises 269 residues: Glutamate racemase (269 aa).

Substrate-binding positions include 14-15 and 46-47; these read DS and YS. The active-site Proton donor/acceptor is cysteine 78. 79–80 is a substrate binding site; that stretch reads NT. Cysteine 189 functions as the Proton donor/acceptor in the catalytic mechanism. 190-191 serves as a coordination point for substrate; it reads TH.

It belongs to the aspartate/glutamate racemases family.

The enzyme catalyses L-glutamate = D-glutamate. The protein operates within cell wall biogenesis; peptidoglycan biosynthesis. Provides the (R)-glutamate required for cell wall biosynthesis. This chain is Glutamate racemase, found in Haemophilus influenzae (strain 86-028NP).